The chain runs to 224 residues: MTKQINSQQIAIDGPAGSGKSTVAKLVAQRLGFDYLSTGKIFRAFYYLIKENNWSIDQLISNFNKYECAFNGDQVVINKENISQLLNDPTISKGASEIAQDPKIRAYALSLQQDYANKKPVVMDGRDITSVVLPNAILKVFLTASAQQRAIRRIKQLNLELNKATLEQFTNEIQQRDDNDTNRKLAPLMIVKDAIVIDSDQLSIEQVVDKIISLYKQRLGVNYA.

Residue 14-22 (GPAGSGKST) participates in ATP binding.

Belongs to the cytidylate kinase family. Type 1 subfamily.

It is found in the cytoplasm. The enzyme catalyses CMP + ATP = CDP + ADP. It catalyses the reaction dCMP + ATP = dCDP + ADP. The chain is Cytidylate kinase from Mycoplasmoides gallisepticum (strain R(low / passage 15 / clone 2)) (Mycoplasma gallisepticum).